A 256-amino-acid chain; its full sequence is 5'-nucleotidase SurE (256 aa).

Residues Asp-8, Asp-9, Ser-40, and Asn-94 each contribute to the a divalent metal cation site.

Belongs to the SurE nucleotidase family. Requires a divalent metal cation as cofactor.

It is found in the cytoplasm. It carries out the reaction a ribonucleoside 5'-phosphate + H2O = a ribonucleoside + phosphate. In terms of biological role, nucleotidase that shows phosphatase activity on nucleoside 5'-monophosphates. In Wolbachia pipientis subsp. Culex pipiens (strain wPip), this protein is 5'-nucleotidase SurE.